We begin with the raw amino-acid sequence, 157 residues long: Crossover junction endodeoxyribonuclease RuvC (157 aa).

Catalysis depends on residues D9, E70, and D142. Mg(2+) is bound by residues D9, E70, and D142.

The protein belongs to the RuvC family. As to quaternary structure, homodimer which binds Holliday junction (HJ) DNA. The HJ becomes 2-fold symmetrical on binding to RuvC with unstacked arms; it has a different conformation from HJ DNA in complex with RuvA. In the full resolvosome a probable DNA-RuvA(4)-RuvB(12)-RuvC(2) complex forms which resolves the HJ. Mg(2+) serves as cofactor.

The protein localises to the cytoplasm. The catalysed reaction is Endonucleolytic cleavage at a junction such as a reciprocal single-stranded crossover between two homologous DNA duplexes (Holliday junction).. The RuvA-RuvB-RuvC complex processes Holliday junction (HJ) DNA during genetic recombination and DNA repair. Endonuclease that resolves HJ intermediates. Cleaves cruciform DNA by making single-stranded nicks across the HJ at symmetrical positions within the homologous arms, yielding a 5'-phosphate and a 3'-hydroxyl group; requires a central core of homology in the junction. The consensus cleavage sequence is 5'-(A/T)TT(C/G)-3'. Cleavage occurs on the 3'-side of the TT dinucleotide at the point of strand exchange. HJ branch migration catalyzed by RuvA-RuvB allows RuvC to scan DNA until it finds its consensus sequence, where it cleaves and resolves the cruciform DNA. The polypeptide is Crossover junction endodeoxyribonuclease RuvC (Cyanothece sp. (strain PCC 7425 / ATCC 29141)).